The primary structure comprises 901 residues: Protein translocase subunit SecA (901 aa).

Residues glutamine 87, glycine 105–threonine 109, and aspartate 512 contribute to the ATP site. Residues cysteine 885, cysteine 887, cysteine 896, and histidine 897 each coordinate Zn(2+).

It belongs to the SecA family. Monomer and homodimer. Part of the essential Sec protein translocation apparatus which comprises SecA, SecYEG and auxiliary proteins SecDF-YajC and YidC. It depends on Zn(2+) as a cofactor.

The protein localises to the cell inner membrane. Its subcellular location is the cytoplasm. The catalysed reaction is ATP + H2O + cellular proteinSide 1 = ADP + phosphate + cellular proteinSide 2.. In terms of biological role, part of the Sec protein translocase complex. Interacts with the SecYEG preprotein conducting channel. Has a central role in coupling the hydrolysis of ATP to the transfer of proteins into and across the cell membrane, serving both as a receptor for the preprotein-SecB complex and as an ATP-driven molecular motor driving the stepwise translocation of polypeptide chains across the membrane. This is Protein translocase subunit SecA from Salmonella schwarzengrund (strain CVM19633).